Here is a 340-residue protein sequence, read N- to C-terminus: 4-amino-5-hydroxymethyl-2-methylpyrimidine phosphate synthase THI12 (340 aa).

K62 carries the N6-(pyridoxal phosphate)lysine modification. H66 is an active-site residue. 115-118 (GEFG) provides a ligand contact to pyridoxal 5'-phosphate. Residues 195–199 (CCCFC) carry the CCCFC; essential for catalytic activity, may be the site of iron coordination motif.

Belongs to the NMT1/THI5 family. In terms of assembly, homodimer. Fe cation serves as cofactor.

The catalysed reaction is N(6)-(pyridoxal phosphate)-L-lysyl-[4-amino-5-hydroxymethyl-2-methylpyrimidine phosphate synthase] + L-histidyl-[4-amino-5-hydroxymethyl-2-methylpyrimidine phosphate synthase] + 2 Fe(3+) + 4 H2O = L-lysyl-[4-amino-5-hydroxymethyl-2-methylpyrimidine phosphate synthase] + (2S)-2-amino-5-hydroxy-4-oxopentanoyl-[4-amino-5-hydroxymethyl-2-methylpyrimidine phosphate synthase] + 4-amino-2-methyl-5-(phosphooxymethyl)pyrimidine + 3-oxopropanoate + 2 Fe(2+) + 2 H(+). It functions in the pathway cofactor biosynthesis; thiamine diphosphate biosynthesis. Responsible for the formation of the pyrimidine heterocycle in the thiamine biosynthesis pathway. Catalyzes the formation of hydroxymethylpyrimidine phosphate (HMP-P) from histidine and pyridoxal phosphate (PLP). The protein uses PLP and the active site histidine to form HMP-P, generating an inactive enzyme. The enzyme can only undergo a single turnover, which suggests it is a suicide enzyme. The protein is 4-amino-5-hydroxymethyl-2-methylpyrimidine phosphate synthase THI12 of Saccharomyces cerevisiae (strain ATCC 204508 / S288c) (Baker's yeast).